A 39-amino-acid polypeptide reads, in one-letter code: Cytochrome b559 subunit beta (39 aa).

A helical transmembrane segment spans residues 14–30; that stretch reads WLAVHGLAVPTVFFLGS. Residue histidine 18 participates in heme binding.

The protein belongs to the PsbE/PsbF family. As to quaternary structure, heterodimer of an alpha subunit and a beta subunit. PSII is composed of 1 copy each of membrane proteins PsbA, PsbB, PsbC, PsbD, PsbE, PsbF, PsbH, PsbI, PsbJ, PsbK, PsbL, PsbM, PsbT, PsbX, PsbY, PsbZ, Psb30/Ycf12, at least 3 peripheral proteins of the oxygen-evolving complex and a large number of cofactors. It forms dimeric complexes. It depends on heme b as a cofactor.

The protein localises to the plastid. It localises to the chloroplast thylakoid membrane. Its function is as follows. This b-type cytochrome is tightly associated with the reaction center of photosystem II (PSII). PSII is a light-driven water:plastoquinone oxidoreductase that uses light energy to abstract electrons from H(2)O, generating O(2) and a proton gradient subsequently used for ATP formation. It consists of a core antenna complex that captures photons, and an electron transfer chain that converts photonic excitation into a charge separation. In Gnetum gnemon (Spanish joint-fir), this protein is Cytochrome b559 subunit beta.